We begin with the raw amino-acid sequence, 493 residues long: Alpha-amylase-related protein (493 aa).

Residues 1–19 (MFKFALTLTLCLAGSLSLA) form the signal peptide. Q20 carries the pyrrolidone carboxylic acid modification. Cysteines 47 and 103 form a disulfide. Ca(2+) is bound by residues N117, Q168, and D177. A disulfide bridge connects residues C156 and C170. R205 contributes to the chloride binding site. D207 acts as the Nucleophile in catalysis. Residue H211 coordinates Ca(2+). The Proton donor role is filled by E244. Residues N307 and R342 each coordinate chloride. Intrachain disulfides connect C375-C381, C417-C440, and C447-C459.

It belongs to the glycosyl hydrolase 13 family. As to quaternary structure, monomer. Requires Ca(2+) as cofactor. The cofactor is chloride.

It localises to the secreted. It catalyses the reaction Endohydrolysis of (1-&gt;4)-alpha-D-glucosidic linkages in polysaccharides containing three or more (1-&gt;4)-alpha-linked D-glucose units.. This Drosophila sechellia (Fruit fly) protein is Alpha-amylase-related protein (Amyrel).